The chain runs to 158 residues: MAAKFLLTILVTFAAVASLGMADSVLLSGQTLYAGHSLTSGSYTLTIQNNCNLVKYQHGRQIWASDTDGQGSQCRLTLRSDGNLIIYDDNNMVVWGSDCWGNNGTYALVLQQDGLFVIYGPVLWPLGLNGCRSLNGEITVAKDSTEPQHEDIKMVINN.

A signal peptide spans 1–22 (MAAKFLLTILVTFAAVASLGMA). The Bulb-type lectin domain maps to 23 to 131 (DSVLLSGQTL…VLWPLGLNGC (109 aa)). Residues Cys51 and Cys74 are joined by a disulfide bond. The N-linked (GlcNAc...) asparagine glycan is linked to Asn103. The propeptide occupies 136–158 (GEITVAKDSTEPQHEDIKMVINN).

As to quaternary structure, heterodimer with curculin-1; Disulfide-linked.

Its function is as follows. Taste-modifying protein; sweet-tasting. After curculin, water elicits a sweet taste, and sour substances induce a stronger sense of sweetness. The sequence is that of Curculin-2 from Molineria latifolia (Lumbah).